Consider the following 428-residue polypeptide: MFVDQVKIYVKGGDGGNGMVAFRREKYVPKGGPAGGDGGKGGDVVFVVDEGLRTLMDFRYQRHFKAPRGEHGMSKNQHGKNAEDLIVKVPPGTVVIDDETKEVIADLTEHGQRFVVAKGGRGGRGNTRFATASNPAPEIAENGEPGQERYVTLELKLLADVGLVGFPSVGKSTLLSVVSAAKPKIADYHFTTIVPNLGVVETEDGRSFVMADLPGLIEGAHQGVGLGHQFLRHIERTRVIVHVIDMAAIEGRDPYEDYVVINEELKQYNLRLTERPQIIVANKMDMPNAEEHLQQFKQKLNEDVPIFPISAVTRQGIRELLFAIADLLETTPEFPLYPQEEEAIHRVVYKLEKEEAPFHITRDDDGTFILSGEKIEKLFKMTDFSREESVRRFARQLRSLGVDDALRARGAKDGDIVKLLNYEFEFVD.

An Obg domain is found at 1–158 (MFVDQVKIYV…RYVTLELKLL (158 aa)). In terms of domain architecture, OBG-type G spans 159-329 (ADVGLVGFPS…LLFAIADLLE (171 aa)). Residues 165–172 (GFPSVGKS), 190–194 (FTTIV), 212–215 (DLPG), 282–285 (NKMD), and 310–312 (SAV) each bind GTP. Positions 172 and 192 each coordinate Mg(2+). The region spanning 350 to 428 (KLEKEEAPFH…LLNYEFEFVD (79 aa)) is the OCT domain.

It belongs to the TRAFAC class OBG-HflX-like GTPase superfamily. OBG GTPase family. As to quaternary structure, monomer. Requires Mg(2+) as cofactor.

The protein resides in the cytoplasm. An essential GTPase which binds GTP, GDP and possibly (p)ppGpp with moderate affinity, with high nucleotide exchange rates and a fairly low GTP hydrolysis rate. Plays a role in control of the cell cycle, stress response, ribosome biogenesis and in those bacteria that undergo differentiation, in morphogenesis control. This Anoxybacillus flavithermus (strain DSM 21510 / WK1) protein is GTPase Obg.